Here is a 461-residue protein sequence, read N- to C-terminus: Transcriptional activator RocR (461 aa).

Position 57 is a 4-aspartylphosphate (Asp57). The 230-residue stretch at 143-372 (ILGTSPAIQD…EHMIEGAMNF (230 aa)) folds into the Sigma-54 factor interaction domain. ATP-binding positions include 171–178 (GETGTGKE) and 233–242 (AHGGTLLLDE). Positions 434-453 (ISKAAQELGISRQSLQYRLK) form a DNA-binding region, H-T-H motif.

In terms of biological role, positive regulator of arginine catabolism. Controls the transcription of the two operons rocABC and rocDEF and probably acts by binding to the corresponding upstream activating sequences. The protein is Transcriptional activator RocR (rocR) of Bacillus subtilis (strain 168).